The sequence spans 328 residues: Gonadotropin-releasing hormone receptor (328 aa).

At 1-38 (MANRAYLEQKQTQCSIINSSFSMTHRDLPTLTLSGKIR) the chain is on the extracellular side. A glycan (N-linked (GlcNAc...) asparagine) is linked at N18. Residues 39-58 (VMVTFFLFLVSTAFNASFLM) traverse the membrane as a helical segment. The Cytoplasmic portion of the chain corresponds to 59 to 77 (KLQRQTQKKEEVKKLTRMK). Residues 78 to 97 (VLLKHLTLANLLETVIVMPL) traverse the membrane as a helical segment. Over 98–115 (DGIWNVTVQWYAGEFLCK) the chain is Extracellular. The N-linked (GlcNAc...) asparagine glycan is linked to N102. A disulfide bond links C114 and C196. The helical transmembrane segment at 116 to 137 (ALSYLKLFSMYAPAFMMVVISL) threads the bilayer. At 138–164 (DRFLAITRPLAVKSNTKVGQSLIAVAW) the chain is on the cytoplasmic side. The helical transmembrane segment at 165-184 (FLSIVLAGPQLYIFRMIYVE) threads the bilayer. At 185 to 212 (DISGQTGNFSQCVTHCSFPEWWQEAFYN) the chain is on the extracellular side. N192 is a glycosylation site (N-linked (GlcNAc...) asparagine). The chain crosses the membrane as a helical span at residues 213-232 (LLTFSCLFIGPLLIMLVCNA). The Cytoplasmic segment spans residues 233 to 281 (KIIFTLTQVLHQDPHELQLNRSKNNIPRARLRTLKMTVAFATLFTICWT). Residues 282–300 (PYYVLGIWYWFDPEMLNRV) traverse the membrane as a helical segment. The Extracellular segment spans residues 301–306 (SDPVNH). The chain crosses the membrane as a helical span at residues 307-326 (FFFLFGLLNPCFDPLIYGYF). Topologically, residues 327 to 328 (SL) are cytoplasmic.

This sequence belongs to the G-protein coupled receptor 1 family.

It localises to the cell membrane. Receptor for gonadotropin releasing hormone (GnRH) that mediates the action of GnRH to stimulate the secretion of the gonadotropic hormones luteinizing hormone (LH) and follicle-stimulating hormone (FSH). This receptor mediates its action by association with G-proteins that activate a phosphatidylinositol-calcium second messenger system. The chain is Gonadotropin-releasing hormone receptor (GNRHR) from Trichosurus vulpecula (Brush-tailed possum).